Reading from the N-terminus, the 526-residue chain is Cytochrome P450 monooxygenase 253 (526 aa).

Transmembrane regions (helical) follow at residues 13–33 (IASS…LLLI), 115–135 (FIMA…GYGK), and 306–326 (IGAG…AMTL). A heme-binding site is contributed by Cys451.

This sequence belongs to the cytochrome P450 family. Heme serves as cofactor.

The protein resides in the membrane. Its pathway is secondary metabolite biosynthesis. Cytochrome P450 monooxygenase that is able to use delta(6)-protoilludene as a substrate to produce delta(6)-protoilludene-8-ol. This is Cytochrome P450 monooxygenase 253 from Postia placenta (strain ATCC 44394 / Madison 698-R) (Brown rot fungus).